Reading from the N-terminus, the 472-residue chain is Type I restriction enzyme BthVORF4518P methylase subunit (472 aa).

Residues 151-156 (QYFTPR), 181-183 (TGG), Asp-214, and 243-244 (DS) contribute to the S-adenosyl-L-methionine site.

Belongs to the N(4)/N(6)-methyltransferase family. The type I restriction/modification system is composed of three polypeptides R, M and S; the restriction enzyme has stoichiometry R(2)M(2)S(1) while the methyltransferase is M(2)S(1).

The enzyme catalyses a 2'-deoxyadenosine in DNA + S-adenosyl-L-methionine = an N(6)-methyl-2'-deoxyadenosine in DNA + S-adenosyl-L-homocysteine + H(+). Its function is as follows. The subtype gamma methyltransferase (M) subunit of a type I restriction enzyme. The M and S subunits together form a methyltransferase (MTase) that methylates two adenine residues of an undetermined sequence. In the presence of the R subunit the complex can also act as an endonuclease, binding to the same target sequence but cutting the DNA some distance from this site. Whether the DNA is cut or modified depends on the methylation state of the target sequence. When the target site is unmodified, the DNA is cut. When the target site is hemimethylated, the complex acts as a maintenance MTase modifying the DNA so that both strands become methylated. After locating a non-methylated recognition site, the enzyme complex serves as a molecular motor that translocates DNA in an ATP-dependent manner until a collision occurs that triggers cleavage. The polypeptide is Type I restriction enzyme BthVORF4518P methylase subunit (Bacteroides thetaiotaomicron (strain ATCC 29148 / DSM 2079 / JCM 5827 / CCUG 10774 / NCTC 10582 / VPI-5482 / E50)).